We begin with the raw amino-acid sequence, 205 residues long: Thymidine kinase (205 aa).

Residues 9–16 (SAMNAGKS) and 87–90 (DECQ) contribute to the ATP site. Glutamate 88 functions as the Proton acceptor in the catalytic mechanism. 4 residues coordinate Zn(2+): cysteine 145, cysteine 147, cysteine 182, and histidine 185.

This sequence belongs to the thymidine kinase family. As to quaternary structure, homotetramer.

It is found in the cytoplasm. It catalyses the reaction thymidine + ATP = dTMP + ADP + H(+). With respect to regulation, allosteric enzyme which is feedback inhibited by dTTP and activated by a number of dNDP and dNTP. Phosphorylates both thymidine and deoxyuridine. The chain is Thymidine kinase from Escherichia coli (strain K12).